Reading from the N-terminus, the 372-residue chain is MRSSSWRKSDQRVFIEQVRECMNNGYLLSSKKIGSGAFSKVYLAYATRERMKHNPRLSSDLRGKRHTMVAIKIVSMAEAPAEYSRKFLPREILSLNATYKHMNIVQLYETYQNSQRSYLVLELAARGDLLEHINAVSDLRCCPGLEEEEARRLFWQLVSAVAHCHNVGIVHRDLKCENILLDDQGFIKLTDFGFANWVGLKNSLLSTFCGSVAYTAPEILMSKKYNGEQADLWSLGIILHAMVSGKLPFKEHQPHRMLNLIRRGPIFRPGLSPECRDLIRGLLQLHPCERLDLQQVAAHCWMLPAEHMLSSALGAPREQDHSWSTVAPDNTEPDRDTRHARSKGSSSSSGRTSPRRPSLAQLCNTWKPAPEQ.

A Protein kinase domain is found at 27–302 (LLSSKKIGSG…LQQVAAHCWM (276 aa)). Residues 33–41 (IGSGAFSKV) and Lys-72 each bind ATP. Asp-173 serves as the catalytic Proton acceptor. The interval 314-372 (GAPREQDHSWSTVAPDNTEPDRDTRHARSKGSSSSSGRTSPRRPSLAQLCNTWKPAPEQ) is disordered. The segment covering 343–358 (KGSSSSSGRTSPRRPS) has biased composition (low complexity).

This sequence belongs to the protein kinase superfamily. CAMK Ser/Thr protein kinase family. Mg(2+) is required as a cofactor. In terms of processing, autophosphorylated.

It carries out the reaction L-seryl-[protein] + ATP = O-phospho-L-seryl-[protein] + ADP + H(+). The catalysed reaction is L-threonyl-[protein] + ATP = O-phospho-L-threonyl-[protein] + ADP + H(+). Activated by phosphorylation on Thr-207, potentially by autophosphorylation. In terms of biological role, may be involved in a signaling pathway during male germ cell development or mature sperm function. The polypeptide is Testis-specific serine/threonine-protein kinase 5 (Mus musculus (Mouse)).